The following is an 896-amino-acid chain: Protein translocase subunit SecA (896 aa).

ATP-binding positions include Gln-87, 105–109, and Asp-507; that span reads GEGKT. The tract at residues 853–879 is disordered; it reads ESLSENDEASETQTFRRQEKKIGRNDP. A compositionally biased stretch (basic and acidic residues) spans 866-876; it reads TFRRQEKKIGR. Residues Cys-880, Cys-882, Cys-891, and His-892 each coordinate Zn(2+).

It belongs to the SecA family. Monomer and homodimer. Part of the essential Sec protein translocation apparatus which comprises SecA, SecYEG and auxiliary proteins SecDF-YajC and YidC. Zn(2+) is required as a cofactor.

Its subcellular location is the cell inner membrane. The protein localises to the cytoplasm. It carries out the reaction ATP + H2O + cellular proteinSide 1 = ADP + phosphate + cellular proteinSide 2.. Its function is as follows. Part of the Sec protein translocase complex. Interacts with the SecYEG preprotein conducting channel. Has a central role in coupling the hydrolysis of ATP to the transfer of proteins into and across the cell membrane, serving both as a receptor for the preprotein-SecB complex and as an ATP-driven molecular motor driving the stepwise translocation of polypeptide chains across the membrane. In Legionella pneumophila subsp. pneumophila (strain Philadelphia 1 / ATCC 33152 / DSM 7513), this protein is Protein translocase subunit SecA.